We begin with the raw amino-acid sequence, 255 residues long: Myogenic factor 5 (255 aa).

Positions 83-134 constitute a bHLH domain; it reads DRRKAATMRERRRLKKVNQAFETLKRCTTTNPNQRLPKVEILRNAIQYIESL. Over residues 221–242 the composition is skewed to low complexity; the sequence is SLPIPDSITPSPTSSTDSLPRS. The tract at residues 221–246 is disordered; the sequence is SLPIPDSITPSPTSSTDSLPRSPDAH.

Efficient DNA binding requires dimerization with another bHLH protein.

The protein resides in the nucleus. Its function is as follows. Acts as a transcriptional activator that promotes transcription of muscle-specific target genes and plays a role in muscle differentiation. Induces fibroblasts to differentiate into myoblasts. Probable sequence specific DNA-binding protein. In Xenopus laevis (African clawed frog), this protein is Myogenic factor 5 (myf5).